We begin with the raw amino-acid sequence, 267 residues long: Ribosomal RNA small subunit methyltransferase A (267 aa).

S-adenosyl-L-methionine is bound by residues Leu20, Gly45, Glu68, Asp91, and Asn113.

Belongs to the class I-like SAM-binding methyltransferase superfamily. rRNA adenine N(6)-methyltransferase family. RsmA subfamily.

It localises to the cytoplasm. The catalysed reaction is adenosine(1518)/adenosine(1519) in 16S rRNA + 4 S-adenosyl-L-methionine = N(6)-dimethyladenosine(1518)/N(6)-dimethyladenosine(1519) in 16S rRNA + 4 S-adenosyl-L-homocysteine + 4 H(+). In terms of biological role, specifically dimethylates two adjacent adenosines (A1518 and A1519) in the loop of a conserved hairpin near the 3'-end of 16S rRNA in the 30S particle. May play a critical role in biogenesis of 30S subunits. The protein is Ribosomal RNA small subunit methyltransferase A of Blochmanniella pennsylvanica (strain BPEN).